The chain runs to 510 residues: NAD(P)H-quinone oxidoreductase subunit 2 A, chloroplastic (510 aa).

Transmembrane regions (helical) follow at residues 24–44 (LLLF…GLIL), 57–77 (IPWL…ALLF), 99–119 (IFQF…VEYI), 124–144 (MAIT…MFLC), 149–169 (LITI…LSGY), 183–203 (YLLM…WLYG), 227–247 (PGIS…LSPA), 295–315 (WHLL…LIAI), 323–343 (MLAY…IVGD), 354–374 (YMLF…LFGL), 395–415 (ALSL…AGFF), 418–438 (LYLF…IGLL), and 484–504 (MIVC…IIAI).

The protein belongs to the complex I subunit 2 family. As to quaternary structure, NDH is composed of at least 16 different subunits, 5 of which are encoded in the nucleus.

Its subcellular location is the plastid. The protein resides in the chloroplast thylakoid membrane. The catalysed reaction is a plastoquinone + NADH + (n+1) H(+)(in) = a plastoquinol + NAD(+) + n H(+)(out). The enzyme catalyses a plastoquinone + NADPH + (n+1) H(+)(in) = a plastoquinol + NADP(+) + n H(+)(out). Its function is as follows. NDH shuttles electrons from NAD(P)H:plastoquinone, via FMN and iron-sulfur (Fe-S) centers, to quinones in the photosynthetic chain and possibly in a chloroplast respiratory chain. The immediate electron acceptor for the enzyme in this species is believed to be plastoquinone. Couples the redox reaction to proton translocation, and thus conserves the redox energy in a proton gradient. The chain is NAD(P)H-quinone oxidoreductase subunit 2 A, chloroplastic from Panax ginseng (Korean ginseng).